The sequence spans 213 residues: 3-hexulose-6-phosphate synthase 2 (213 aa).

It belongs to the HPS/KGPDC family. HPS subfamily.

The enzyme catalyses D-ribulose 5-phosphate + formaldehyde = D-arabino-hex-3-ulose 6-phosphate. It participates in one-carbon metabolism; formaldehyde assimilation via RuMP pathway; D-fructose 6-phosphate from D-ribulose 5-phosphate and formaldehyde: step 1/2. Catalyzes the condensation of ribulose 5-phosphate with formaldehyde to form 3-hexulose 6-phosphate. The sequence is that of 3-hexulose-6-phosphate synthase 2 from Staphylococcus saprophyticus subsp. saprophyticus (strain ATCC 15305 / DSM 20229 / NCIMB 8711 / NCTC 7292 / S-41).